The chain runs to 186 residues: Single-stranded DNA-binding protein 1 (186 aa).

An SSB domain is found at 1-108 (MDATVTVVGN…LEIDEIGPTL (108 aa)). A disordered region spans residues 120 to 186 (QAGHGVSPDP…EDFDSDEVPF (67 aa)). A compositionally biased stretch (polar residues) spans 132–141 (DSQTGQGIDS). Acidic residues predominate over residues 175–186 (SYEDFDSDEVPF).

As to quaternary structure, homotetramer.

The polypeptide is Single-stranded DNA-binding protein 1 (ssb1) (Tropheryma whipplei (strain TW08/27) (Whipple's bacillus)).